Reading from the N-terminus, the 892-residue chain is Transmembrane channel-like protein 2-B (892 aa).

A disordered region spans residues 29-125 (GINQNLRREE…DESMSEGEMA (97 aa)). Basic residues-rich tracts occupy residues 48-58 (RRAKKRRMNRR) and 66-77 (RSKKMRMRVRKN). Low complexity predominate over residues 103-112 (PSSCSSSSDN). Helical transmembrane passes span 235–255 (LVLF…MGIP), 275–295 (FSVL…YGFY), 308–328 (LPLS…MVVI), 403–423 (LANV…YAVV), 444–464 (EVEI…EAIA), 482–502 (IFAL…DEVN), 616–636 (LIFN…LVGI), 671–691 (FYMG…IYSI), and 736–756 (GLII…LNAV). A compositionally biased stretch (basic and acidic residues) spans 772-785 (QMQRDEEKNRRNNK). 2 disordered regions span residues 772 to 791 (QMQR…TNQV) and 796 to 892 (EDLL…PPRR). Residues 862–878 (PRQPGPLPGNPRGPPPG) show a composition bias toward pro residues.

Belongs to the TMC family. In adults, expression is restricted to the hair cells of inner ear and lateral line organ. Expressed at higher levels in the larval lateral-line neuromasts than in the larval inner ear.

It localises to the membrane. In terms of biological role, probable component of the mechanotransducer (MET) non-selective cation channel. The protein is Transmembrane channel-like protein 2-B of Danio rerio (Zebrafish).